A 290-amino-acid chain; its full sequence is Diaminopimelate epimerase (290 aa).

Positions 17, 49, and 69 each coordinate substrate. The Proton donor role is filled by Cys-78. Substrate contacts are provided by residues 79-80 (GN), Asn-166, Asn-199, and 217-218 (ER). Residue Cys-226 is the Proton acceptor of the active site. 227–228 (GS) contacts substrate.

Belongs to the diaminopimelate epimerase family. As to quaternary structure, homodimer.

Its subcellular location is the cytoplasm. The enzyme catalyses (2S,6S)-2,6-diaminopimelate = meso-2,6-diaminopimelate. The protein operates within amino-acid biosynthesis; L-lysine biosynthesis via DAP pathway; DL-2,6-diaminopimelate from LL-2,6-diaminopimelate: step 1/1. Catalyzes the stereoinversion of LL-2,6-diaminopimelate (L,L-DAP) to meso-diaminopimelate (meso-DAP), a precursor of L-lysine and an essential component of the bacterial peptidoglycan. In Nitrobacter hamburgensis (strain DSM 10229 / NCIMB 13809 / X14), this protein is Diaminopimelate epimerase.